The primary structure comprises 158 residues: C-type lectin BiL (158 aa).

The signal sequence occupies residues 1–23 (MGRFIFVSFGLLVVFLSLSGAKG). Cystine bridges form between C26–C37, C54–C154, C61–C156, and C129–C146. Residues 33 to 155 (MNGLCYKIFD…CESKNAFLCQ (123 aa)) enclose the C-type lectin domain. The Ca(2+) site is built by Q119, D121, E127, N142, and D143. The Galactose-binding motif lies at 119–121 (QPD).

As to quaternary structure, homodimer; disulfide-linked. In terms of tissue distribution, expressed by the venom gland.

The protein localises to the secreted. In terms of biological role, lectin with a hemagglutinating activity that is inhibited by galactose, lactose and EDTA. Is calcium-dependent. Shows effects on the renal function of isolated perfused rat kidneys by increasing both perfusion pressure (PP) and renal vascular resistance (RVR). In addition, the urinary flow and glomerular filtration rate (GFR) decreases significantly. The changes observed may reflect direct injury to the glomerular and tubular renal cells, and the rise in permeability in the glomerular endothelial cells, may be the effect of interactions of C-type lectin with endothelial cells or due to release of other mediators by mesangial, tubular and endothelial cells. This chain is C-type lectin BiL, found in Bothrops insularis (Golden lancehead).